The following is a 560-amino-acid chain: Protein DETOXIFICATION 45, chloroplastic (560 aa).

A chloroplast-targeting transit peptide spans 1–75 (MESSRVVVGG…QTNPDCGVVK (75 aa)). The next 12 membrane-spanning stretches (helical) occupy residues 109-129 (LVML…TLLM), 147-167 (VSMA…LSVA), 209-229 (ALVL…LASG), 250-270 (FLVL…LQGI), 280-300 (PVYC…LFIY), 308-328 (GAAI…LILL), 353-373 (FVLG…SMAA), 389-411 (VWLA…IASS), 426-446 (FVLK…GMSF), 466-486 (GVLF…FDGL), 495-515 (YAAC…LYAP), and 523-543 (VWVG…SRLM).

This sequence belongs to the multi antimicrobial extrusion (MATE) (TC 2.A.66.1) family. In terms of tissue distribution, ubiquitous.

The protein localises to the plastid. It is found in the chloroplast membrane. In Arabidopsis thaliana (Mouse-ear cress), this protein is Protein DETOXIFICATION 45, chloroplastic.